We begin with the raw amino-acid sequence, 130 residues long: Small ribosomal subunit protein uS9 (130 aa).

Positions 102–130 (GFLTRDPRKKERKKYGLKKARKSPQFSKR) are disordered. A compositionally biased stretch (basic residues) spans 111-130 (KERKKYGLKKARKSPQFSKR).

It belongs to the universal ribosomal protein uS9 family.

The chain is Small ribosomal subunit protein uS9 from Finegoldia magna (strain ATCC 29328 / DSM 20472 / WAL 2508) (Peptostreptococcus magnus).